The primary structure comprises 327 residues: Methionyl-tRNA formyltransferase (327 aa).

Residue 117 to 120 (SLLP) coordinates (6S)-5,6,7,8-tetrahydrofolate.

This sequence belongs to the Fmt family.

The enzyme catalyses L-methionyl-tRNA(fMet) + (6R)-10-formyltetrahydrofolate = N-formyl-L-methionyl-tRNA(fMet) + (6S)-5,6,7,8-tetrahydrofolate + H(+). In terms of biological role, attaches a formyl group to the free amino group of methionyl-tRNA(fMet). The formyl group appears to play a dual role in the initiator identity of N-formylmethionyl-tRNA by promoting its recognition by IF2 and preventing the misappropriation of this tRNA by the elongation apparatus. This Delftia acidovorans (strain DSM 14801 / SPH-1) protein is Methionyl-tRNA formyltransferase.